Consider the following 20-residue polypeptide: Methyl-coenzyme M reductase subunit gamma (20 aa).

The tract at residues 1-20 is disordered; that stretch reads AYERQFYPGATSVAENNIGH.

The protein belongs to the methyl-coenzyme M reductase gamma subunit family. MCR from M.thermophila is a heterotrimer composed of an alpha, a beta, and a gamma subunit. The cofactor is coenzyme F430.

Its subcellular location is the cytoplasm. The enzyme catalyses coenzyme B + methyl-coenzyme M = methane + coenzyme M-coenzyme B heterodisulfide. The protein operates within one-carbon metabolism; methyl-coenzyme M reduction; methane from methyl-coenzyme M: step 1/1. Component of the methyl-coenzyme M reductase (MCR) I that catalyzes the reductive cleavage of methyl-coenzyme M (CoM-S-CH3 or 2-(methylthio)ethanesulfonate) using coenzyme B (CoB or 7-mercaptoheptanoylthreonine phosphate) as reductant which results in the production of methane and the mixed heterodisulfide of CoB and CoM (CoM-S-S-CoB). This is the final step in methanogenesis. The sequence is that of Methyl-coenzyme M reductase subunit gamma from Methanosarcina thermophila.